Reading from the N-terminus, the 560-residue chain is Formate--tetrahydrofolate ligase (560 aa).

69-76 (TPAGEGKS) serves as a coordination point for ATP.

The protein belongs to the formate--tetrahydrofolate ligase family.

It carries out the reaction (6S)-5,6,7,8-tetrahydrofolate + formate + ATP = (6R)-10-formyltetrahydrofolate + ADP + phosphate. It participates in one-carbon metabolism; tetrahydrofolate interconversion. The protein is Formate--tetrahydrofolate ligase of Listeria monocytogenes serovar 1/2a (strain ATCC BAA-679 / EGD-e).